The sequence spans 248 residues: Mannosylfructose-phosphate phosphatase (248 aa).

This sequence belongs to the sucrose phosphatase family.

It catalyses the reaction beta-D-fructofuranosyl alpha-D-mannopyranoside 6(F)-phosphate + H2O = beta-D-fructofuranosyl alpha-D-mannopyranoside + phosphate. It participates in carbohydrate metabolism; mannosylfructose biosynthesis; beta-D-fructofuranosyl alpha-D-mannopyranoside from D-fructose 6-phosphate and GDP-alpha-D-mannose: step 2/2. Inhibited by the phosphatase inhibitors fluoride, molybdate and orthovanadate. In Agrobacterium fabrum (strain C58 / ATCC 33970) (Agrobacterium tumefaciens (strain C58)), this protein is Mannosylfructose-phosphate phosphatase.